The primary structure comprises 156 residues: Small ribosomal subunit protein uS7 (156 aa).

This sequence belongs to the universal ribosomal protein uS7 family. Part of the 30S ribosomal subunit. Contacts proteins S9 and S11.

Functionally, one of the primary rRNA binding proteins, it binds directly to 16S rRNA where it nucleates assembly of the head domain of the 30S subunit. Is located at the subunit interface close to the decoding center, probably blocks exit of the E-site tRNA. This is Small ribosomal subunit protein uS7 from Brevibacillus brevis (strain 47 / JCM 6285 / NBRC 100599).